We begin with the raw amino-acid sequence, 214 residues long: MATALNSKNASSNTAVHIEPKTGIAFPVKLDDGKSLNSVGLRKKSLLGMGIKVFGFGLYADNEKLKNLLKLKIGKSPAKPTEEMYQLVIDGDIGLTHKIVIAYSGLKMNMFKKAFSEALGESIMKLNGGRKNEELANKVLGPASDQIKLATGSEMEISKLPGYVLETKVHGELASRVESELLCRAYFGIYLGEITMECYKESKEMFGQSMLSLF.

It belongs to the chalcone isomerase family. In terms of tissue distribution, mostly expressed in glandular trichomes (lupulin glands), and, to a lower extent, in cones, cones bracts, leaves, stems and roots.

Its subcellular location is the cytoplasm. The enzyme catalyses a chalcone = a flavanone.. The protein operates within secondary metabolite biosynthesis; flavonoid biosynthesis. Involved in the biosynthesis of prenylated phenolics natural products which contribute to the bitter taste of beer and display broad biological activities. Involved in anthocyanin biosynthesis. Polyketide binding proteins (PBP) which reduces the catalytic activities of CHS_H1 and PT1L and prevents demethylxanthohumol (DMX) production, by binding to DMX and naringenin chalcone (NC) to stabilize the chalconoids ring-opened structure. The sequence is that of Chalcone isomerase-like protein 1 from Humulus lupulus (European hop).